We begin with the raw amino-acid sequence, 103 residues long: BLOC-1-related complex subunit 7 (103 aa).

Belongs to the BORCS7 family.

It is found in the lysosome membrane. As part of a BORC-like complex may play a role in lysosomes movement and localization at the cell periphery. Associated with the cytosolic face of lysosomes, this complex may couple lysosomes to microtubule plus-end-directed kinesin motor. This is BLOC-1-related complex subunit 7 from Danio rerio (Zebrafish).